We begin with the raw amino-acid sequence, 163 residues long: MTKIGGILVCLVIVGLDVAAAILGIQAEVAQNQVKHMRLWLFECREPSQDAFRLGLGAAAILVMAHVLLNLVGGCLCICSQDEFQRSSSTRQISMACLVLTWIVFAVGFGSIVIGTMSNSKSRSSCGFTHHHFLSIGGILCFLHALFCVAYYVSATAAKDEAK.

The N-terminal stretch at 1 to 27 is a signal peptide; the sequence is MTKIGGILVCLVIVGLDVAAAILGIQA. 3 helical membrane-spanning segments follow: residues 54–74, 95–115, and 133–153; these read LGLG…LVGG, MACL…IVIG, and FLSI…AYYV.

This sequence belongs to the DESIGUAL family. Interacts with OPS. Expressed in vascular cells, mostly in hypocotyls, and, to a lower extent, in seedlings, roots, flowers, siliques, developing leaves and inflorescences, but barely in mature leaves and seeds. High levels in leaf primordia.

The protein localises to the endoplasmic reticulum membrane. In terms of biological role, required, together with OPS, for embryo provasculature development and cotyledon vascular complexity and connectivity. Necessary, partially redundantly with DEAL2 and DEAL3, to ensure bilateral symmetry development and early leaf margin patterning, probably via the regulation of auxin and CUC2 distribution. Regulates cell proliferation but not cell expansion. This is Protein VASCULATURE COMPLEXITY AND CONNECTIVITY from Arabidopsis thaliana (Mouse-ear cress).